Consider the following 519-residue polypeptide: 6-phosphofructo-2-kinase/fructose-2,6-bisphosphatase 2 (519 aa).

A compositionally biased stretch (polar residues) spans 1–17 (MSENSTFSTEDSCNSSY). The interval 1–22 (MSENSTFSTEDSCNSSYKPHAS) is disordered. N-acetylserine is present on Ser-2. A 6-phosphofructo-2-kinase region spans residues 2–251 (SENSTFSTED…VYYLMNIHVH (250 aa)). At Ser-32 the chain carries Phosphoserine; by PKA. 48–56 (GLPARGKTY) lines the ATP pocket. The beta-D-fructose 6-phosphate site is built by Arg-81 and Arg-105. The active site involves Asp-131. Positions 133 and 139 each coordinate beta-D-fructose 6-phosphate. Residue Cys-161 is part of the active site. 170 to 175 (NILEVK) lines the ATP pocket. Positions 175, 196, and 200 each coordinate beta-D-fructose 6-phosphate. Residues 252–519 (PRTIYLCRHG…PKTQVSIPVV (268 aa)) form a fructose-2,6-bisphosphatase region. Arg-259 is a beta-D-fructose 2,6-bisphosphate binding site. His-260 (tele-phosphohistidine intermediate) is an active-site residue. Residues Asn-266 and Gly-272 each contribute to the beta-D-fructose 2,6-bisphosphate site. Residue Glu-329 is the Proton donor/acceptor of the active site. 6 residues coordinate beta-D-fructose 2,6-bisphosphate: Tyr-340, Arg-354, Lys-358, Tyr-369, Gln-395, and Arg-399. Residue 351–354 (FALR) participates in ATP binding. ATP contacts are provided by residues 395–399 (QAVMR) and Tyr-431. Residues 448 to 493 (HRDKPTHNFPKSQTPVRMRRNSFTPLSSSNTIRRPRNYSVGSRPLK) form a disordered region. Residues 456–479 (FPKSQTPVRMRRNSFTPLSSSNTI) show a composition bias toward polar residues. Position 469 is a phosphoserine (Ser-469). Phosphothreonine is present on Thr-471. At Thr-478 the chain carries Phosphothreonine; by PKC. Residues Ser-486 and Ser-496 each carry the phosphoserine modification. Positions 500–519 (ALDMQEGADQPKTQVSIPVV) are disordered. Over residues 510–519 (PKTQVSIPVV) the composition is skewed to polar residues.

In the C-terminal section; belongs to the phosphoglycerate mutase family. Homodimer. Forms a heterodimer with PFKFB3. Post-translationally, phosphorylation by AMPK stimulates activity. As to expression, highest levels in kidney; also found in heart, brain, spleen, lung, liver, skeletal muscle and testis.

The catalysed reaction is beta-D-fructose 2,6-bisphosphate + H2O = beta-D-fructose 6-phosphate + phosphate. It catalyses the reaction beta-D-fructose 6-phosphate + ATP = beta-D-fructose 2,6-bisphosphate + ADP + H(+). Its activity is regulated as follows. Phosphorylation results in the activation of the kinase activity. In terms of biological role, synthesis and degradation of fructose 2,6-bisphosphate. This is 6-phosphofructo-2-kinase/fructose-2,6-bisphosphatase 2 (Pfkfb2) from Mus musculus (Mouse).